The chain runs to 82 residues: Small ribosomal subunit protein uS17 (82 aa).

This sequence belongs to the universal ribosomal protein uS17 family. Part of the 30S ribosomal subunit.

Its function is as follows. One of the primary rRNA binding proteins, it binds specifically to the 5'-end of 16S ribosomal RNA. The sequence is that of Small ribosomal subunit protein uS17 from Shewanella amazonensis (strain ATCC BAA-1098 / SB2B).